A 463-amino-acid chain; its full sequence is 23S rRNA (uracil(1939)-C(5))-methyltransferase RlmD (463 aa).

The region spanning 8–76 (RSKSATVYTF…KRFEEGELIE (69 aa)) is the TRAM domain. C90, C96, C99, and C178 together coordinate [4Fe-4S] cluster. Residues Q288, F317, N322, E341, D368, and D389 each contribute to the S-adenosyl-L-methionine site. C415 (nucleophile) is an active-site residue.

It belongs to the class I-like SAM-binding methyltransferase superfamily. RNA M5U methyltransferase family. RlmD subfamily.

The catalysed reaction is uridine(1939) in 23S rRNA + S-adenosyl-L-methionine = 5-methyluridine(1939) in 23S rRNA + S-adenosyl-L-homocysteine + H(+). Catalyzes the formation of 5-methyl-uridine at position 1939 (m5U1939) in 23S rRNA. The sequence is that of 23S rRNA (uracil(1939)-C(5))-methyltransferase RlmD from Acinetobacter baylyi (strain ATCC 33305 / BD413 / ADP1).